Here is a 1330-residue protein sequence, read N- to C-terminus: Sister chromatid cohesion protein PDS5 homolog A (1330 aa).

One copy of the HEAT repeat lies at 387-423; the sequence is SLVNDQLLGFVRERTLDKRWRVRKEAMMGLAQLYKKY. A disordered region spans residues 1138 to 1330; the sequence is VNKPLSATGR…AAQRQIDLQR (193 aa). Residues 1160–1171 show a composition bias toward low complexity; it reads SNISVNSELSSS. The segment covering 1216–1225 has biased composition (polar residues); sequence SDQATQGNST.

Belongs to the PDS5 family. Interacts with the cohesin complex. Binds chromatin in a cohesin-dependent manner.

It is found in the nucleus. Functionally, may regulate sister chromatid cohesion during mitosis and couple it to DNA replication. In Gallus gallus (Chicken), this protein is Sister chromatid cohesion protein PDS5 homolog A.